A 246-amino-acid chain; its full sequence is Small ribosomal subunit protein uS2 (246 aa).

Belongs to the universal ribosomal protein uS2 family.

This is Small ribosomal subunit protein uS2 from Azotobacter vinelandii (strain DJ / ATCC BAA-1303).